The sequence spans 619 residues: Mitochondrial Rho GTPase 1 (619 aa).

At 1 to 593 the chain is on the cytoplasmic side; sequence MKKDVRILLV…TQADLKSSTF (593 aa). Residues 2–168 form the Miro 1 domain; the sequence is KKDVRILLVG…FYYAQKAVLH (167 aa). GTP contacts are provided by Arg-14, Gly-16, Lys-17, Thr-18, and Ser-19. Thr-18 provides a ligand contact to Mg(2+). Residues Pro-35 and Asp-57 each coordinate Mg(2+). 6 residues coordinate GTP: Ser-59, Asn-118, Lys-119, Asp-121, Ala-149, and Lys-150. EF-hand domains are found at residues 184–219 and 304–339; these read ACIK…CFNT and HAYL…FPYM. Ca(2+) is bound by residues Asp-197, Asp-199, Asp-201, Thr-203, Glu-208, Asp-317, Asp-319, Asp-321, Ala-323, and Glu-328. The Miro 2 domain maps to 417–580; sequence RNVFRCNVVG…FVKLTTMAMY (164 aa). GTP-binding residues include Gly-429, Cys-430, Gly-431, Lys-432, Ser-433, Gly-434, Arg-448, Lys-529, Asp-531, Thr-559, and Cys-560. Gly-429 lines the Mg(2+) pocket. Residues 594-616 form a helical; Anchor for type IV membrane protein membrane-spanning segment; that stretch reads WLRASFGATVFAFLGFAMYKALI. Topologically, residues 617–619 are mitochondrial intermembrane; that stretch reads KQR.

It belongs to the mitochondrial Rho GTPase family. In terms of assembly, homodimer.

It localises to the mitochondrion outer membrane. It catalyses the reaction GTP + H2O = GDP + phosphate + H(+). The enzyme catalyses ATP + H2O = ADP + phosphate + H(+). It carries out the reaction UTP + H2O = UDP + phosphate + H(+). Functionally, atypical mitochondrial nucleoside-triphosphatase (NTPase) involved in mitochondrial trafficking. Probably involved in control of anterograde transport of mitochondria and their subcellular distribution. Can hydrolyze GTP, ATP and UTP. In Gallus gallus (Chicken), this protein is Mitochondrial Rho GTPase 1 (RHOT1).